The primary structure comprises 198 residues: Recombination protein RecR (198 aa).

The C4-type zinc finger occupies 57–72 (CSVCGRLTDDDPCSIC). Residues 80–175 (TTILVLEDSR…KVTRLARGLA (96 aa)) enclose the Toprim domain.

The protein belongs to the RecR family.

In terms of biological role, may play a role in DNA repair. It seems to be involved in an RecBC-independent recombinational process of DNA repair. It may act with RecF and RecO. This is Recombination protein RecR from Streptococcus pneumoniae (strain Hungary19A-6).